Here is a 382-residue protein sequence, read N- to C-terminus: Succinyl-diaminopimelate desuccinylase (382 aa).

Residue H72 coordinates Zn(2+). Residue D74 is part of the active site. A Zn(2+)-binding site is contributed by D105. Residue E139 is the Proton acceptor of the active site. Positions 140, 168, and 354 each coordinate Zn(2+).

The protein belongs to the peptidase M20A family. DapE subfamily. In terms of assembly, homodimer. Zn(2+) serves as cofactor. It depends on Co(2+) as a cofactor.

The catalysed reaction is N-succinyl-(2S,6S)-2,6-diaminopimelate + H2O = (2S,6S)-2,6-diaminopimelate + succinate. The protein operates within amino-acid biosynthesis; L-lysine biosynthesis via DAP pathway; LL-2,6-diaminopimelate from (S)-tetrahydrodipicolinate (succinylase route): step 3/3. Its function is as follows. Catalyzes the hydrolysis of N-succinyl-L,L-diaminopimelic acid (SDAP), forming succinate and LL-2,6-diaminopimelate (DAP), an intermediate involved in the bacterial biosynthesis of lysine and meso-diaminopimelic acid, an essential component of bacterial cell walls. The polypeptide is Succinyl-diaminopimelate desuccinylase (Shewanella amazonensis (strain ATCC BAA-1098 / SB2B)).